Reading from the N-terminus, the 235-residue chain is Large ribosomal subunit protein uL1 (235 aa).

It belongs to the universal ribosomal protein uL1 family. Part of the 50S ribosomal subunit.

Functionally, binds directly to 23S rRNA. The L1 stalk is quite mobile in the ribosome, and is involved in E site tRNA release. Its function is as follows. Protein L1 is also a translational repressor protein, it controls the translation of the L11 operon by binding to its mRNA. The protein is Large ribosomal subunit protein uL1 of Methylobacterium nodulans (strain LMG 21967 / CNCM I-2342 / ORS 2060).